The chain runs to 547 residues: Phosphatidylinositol/phosphatidylcholine transfer protein SFH7 (547 aa).

Residues 130–304 enclose the CRAL-TRIO domain; sequence EIDQVLKHYP…FFGGLCTCAD (175 aa). Residues 464 to 526 adopt a coiled-coil conformation; that stretch reads SSEYVIMVKR…KKALDETMVN (63 aa).

Belongs to the SFH family.

Its subcellular location is the golgi apparatus membrane. It is found in the cell membrane. Required for transport of secretory proteins from the Golgi complex. Catalyzes the transfer of phosphatidylinositol and phosphatidylcholine between membranes in vitro. In Arabidopsis thaliana (Mouse-ear cress), this protein is Phosphatidylinositol/phosphatidylcholine transfer protein SFH7 (SFH7).